Consider the following 415-residue polypeptide: Serine hydroxymethyltransferase (415 aa).

Residues Leu122 and 126-128 each bind (6S)-5,6,7,8-tetrahydrofolate; that span reads GHL. Lys230 is modified (N6-(pyridoxal phosphate)lysine).

The protein belongs to the SHMT family. In terms of assembly, homodimer. The cofactor is pyridoxal 5'-phosphate.

The protein resides in the cytoplasm. The enzyme catalyses (6R)-5,10-methylene-5,6,7,8-tetrahydrofolate + glycine + H2O = (6S)-5,6,7,8-tetrahydrofolate + L-serine. The protein operates within one-carbon metabolism; tetrahydrofolate interconversion. It functions in the pathway amino-acid biosynthesis; glycine biosynthesis; glycine from L-serine: step 1/1. Functionally, catalyzes the reversible interconversion of serine and glycine with tetrahydrofolate (THF) serving as the one-carbon carrier. This reaction serves as the major source of one-carbon groups required for the biosynthesis of purines, thymidylate, methionine, and other important biomolecules. Also exhibits THF-independent aldolase activity toward beta-hydroxyamino acids, producing glycine and aldehydes, via a retro-aldol mechanism. The chain is Serine hydroxymethyltransferase from Cupriavidus necator (strain ATCC 17699 / DSM 428 / KCTC 22496 / NCIMB 10442 / H16 / Stanier 337) (Ralstonia eutropha).